The primary structure comprises 562 residues: Transmembrane E3 ubiquitin-protein ligase FLY1 (562 aa).

The signal sequence occupies residues 1–32 (MKKREHLGLGFFEWQIILWLSIWLAISQQALG). Topologically, residues 33-262 (LRPIREKPRS…TSVNVEVYYN (230 aa)) are lumenal. A helical membrane pass occupies residues 263-283 (KAVNYTLMVTFVSFLQVLLLI). Residues 284-297 (RQMEHGNTQSGAAK) lie on the Cytoplasmic side of the membrane. The chain crosses the membrane as a helical span at residues 298-318 (VSIVMIGQQAIMDAYLCLLHL). Over 319-321 (TAG) the chain is Lumenal. The chain crosses the membrane as a helical span at residues 322–342 (ILVESLFNAFATAAFFKFVVF). The Cytoplasmic segment spans residues 343–373 (SIFEMRYLLAIWKATRPSNSGEGWETMRREL). A helical membrane pass occupies residues 374–394 (SFLYSRFYGILLGGILIMYQF). Residues 395-397 (HNY) are Lumenal-facing. A helical transmembrane segment spans residues 398–418 (MQPILLLMYSFWIPQIVANVV). At 419–426 (RDSRKPLH) the chain is on the cytoplasmic side. A helical transmembrane segment spans residues 427 to 447 (PYYILGMTATRLAIPLYVFGC). Residues 448–458 (PHNFMRVEPNK) lie on the Lumenal side of the membrane. The chain crosses the membrane as a helical span at residues 459–479 (VWCICLCTFMGLQAVILLLQH). The Cytoplasmic portion of the chain corresponds to 480 to 562 (YFGSRCFVPR…PTCRRSLPPA (83 aa)). The segment at 512-556 (CVICMTAIDLRQHTSDCMVTPCEHFFHSGCLQRWMDIKMECPTCR) adopts an RING-type; atypical zinc-finger fold.

As to expression, highly expressed in stems. Expressed in root xylem and seed coat.

Its subcellular location is the endomembrane system. The enzyme catalyses S-ubiquitinyl-[E2 ubiquitin-conjugating enzyme]-L-cysteine + [acceptor protein]-L-lysine = [E2 ubiquitin-conjugating enzyme]-L-cysteine + N(6)-ubiquitinyl-[acceptor protein]-L-lysine.. Its pathway is protein modification; protein ubiquitination. E3 ubiquitin-protein ligase that regulates the degree of methylesterification of pectin in seed mucilage. May be involved in the recycling of pectin methylesterase enzymes in the endomembrane system of seed coat epidermal cells. Possesses E3 ubiquitin-protein ligase activity in vitro when associated with the E1 enzyme UBA1 and the E2 enzyme UBC8. May be involved in xylem development. This chain is Transmembrane E3 ubiquitin-protein ligase FLY1, found in Arabidopsis thaliana (Mouse-ear cress).